Reading from the N-terminus, the 198-residue chain is Phosphoheptose isomerase (198 aa).

One can recognise an SIS domain in the interval 36-198; it reads MIGSLLNNGK…DCLLLGVEDQ (163 aa). 51-53 is a substrate binding site; sequence NGG. Zn(2+) is bound by residues His-60 and Glu-64. Substrate-binding positions include Glu-64, 93 to 94, 119 to 121, Ser-124, and Gln-174; these read ND and STS. Gln-174 and His-182 together coordinate Zn(2+).

The protein belongs to the SIS family. GmhA subfamily. In terms of assembly, homotetramer. It depends on Zn(2+) as a cofactor.

It localises to the cytoplasm. The enzyme catalyses 2 D-sedoheptulose 7-phosphate = D-glycero-alpha-D-manno-heptose 7-phosphate + D-glycero-beta-D-manno-heptose 7-phosphate. It functions in the pathway carbohydrate biosynthesis; D-glycero-D-manno-heptose 7-phosphate biosynthesis; D-glycero-alpha-D-manno-heptose 7-phosphate and D-glycero-beta-D-manno-heptose 7-phosphate from sedoheptulose 7-phosphate: step 1/1. Functionally, catalyzes the isomerization of sedoheptulose 7-phosphate in D-glycero-D-manno-heptose 7-phosphate. The chain is Phosphoheptose isomerase from Aromatoleum aromaticum (strain DSM 19018 / LMG 30748 / EbN1) (Azoarcus sp. (strain EbN1)).